A 530-amino-acid chain; its full sequence is Autoinducer-2 kinase (530 aa).

This sequence belongs to the FGGY kinase family.

The protein resides in the cytoplasm. The enzyme catalyses (S)-4,5-dihydroxypentane-2,3-dione + ATP = (2S)-2-hydroxy-3,4-dioxopentyl phosphate + ADP + H(+). In terms of biological role, catalyzes the phosphorylation of autoinducer-2 (AI-2) to phospho-AI-2, which subsequently inactivates the transcriptional regulator LsrR and leads to the transcription of the lsr operon. Phosphorylates the ring-open form of (S)-4,5-dihydroxypentane-2,3-dione (DPD), which is the precursor to all AI-2 signaling molecules, at the C5 position. The chain is Autoinducer-2 kinase from Escherichia coli O139:H28 (strain E24377A / ETEC).